We begin with the raw amino-acid sequence, 249 residues long: Ubiquinone biosynthesis O-methyltransferase (249 aa).

S-adenosyl-L-methionine-binding residues include Arg-41, Gly-72, Asp-93, and Met-136.

The protein belongs to the methyltransferase superfamily. UbiG/COQ3 family.

It carries out the reaction a 3-demethylubiquinol + S-adenosyl-L-methionine = a ubiquinol + S-adenosyl-L-homocysteine + H(+). It catalyses the reaction a 3-(all-trans-polyprenyl)benzene-1,2-diol + S-adenosyl-L-methionine = a 2-methoxy-6-(all-trans-polyprenyl)phenol + S-adenosyl-L-homocysteine + H(+). Its pathway is cofactor biosynthesis; ubiquinone biosynthesis. Functionally, O-methyltransferase that catalyzes the 2 O-methylation steps in the ubiquinone biosynthetic pathway. The sequence is that of Ubiquinone biosynthesis O-methyltransferase from Methylobacterium nodulans (strain LMG 21967 / CNCM I-2342 / ORS 2060).